The following is a 156-amino-acid chain: Large ribosomal subunit protein uL22 (156 aa).

The protein belongs to the universal ribosomal protein uL22 family. In terms of assembly, part of the 50S ribosomal subunit.

In terms of biological role, this protein binds specifically to 23S rRNA. It makes multiple contacts with different domains of the 23S rRNA in the assembled 50S subunit and ribosome. Its function is as follows. The globular domain of the protein is located near the polypeptide exit tunnel on the outside of the subunit, while an extended beta-hairpin is found that lines the wall of the exit tunnel in the center of the 70S ribosome. This is Large ribosomal subunit protein uL22 from Aeropyrum pernix (strain ATCC 700893 / DSM 11879 / JCM 9820 / NBRC 100138 / K1).